Consider the following 354-residue polypeptide: DnaJ homolog shv (354 aa).

Residues 1-22 (MQLIKCLVIIQLSLLLVEESFA) form the signal peptide. In terms of domain architecture, J spans 25-90 (DFYKILNVKK…DKRKTYDRCG (66 aa)). N-linked (GlcNAc...) asparagine glycans are attached at residues Asn260 and Asn312.

In the testes, detected at low levels in somatic hub cells, cyst stem cells and the apical tip (at protein level). Levels in the testes decrease with age (at protein level). Expressed at low levels in hub cells, cyst stem cells and germline stem cells, and at high levels in spermatocytes and cyst cells.

It is found in the nucleus. It localises to the cell membrane. The protein resides in the secreted. In terms of biological role, maintains stem cell niche architecture in the testes. Activates an extracellular integrin beta-PS pathway which regulates DE-cadherin (shg) levels in somatic hub cells, and is essential for maintaining the number of germline stem cells and the structure and localization of hub cells. This Drosophila melanogaster (Fruit fly) protein is DnaJ homolog shv.